The sequence spans 488 residues: 3-octaprenyl-4-hydroxybenzoate carboxy-lyase (488 aa).

Residue Asn172 coordinates Mn(2+). Residues 175–177 (IYR), 189–191 (RWL), and 194–195 (RG) contribute to the prenylated FMN site. Position 238 (Glu238) interacts with Mn(2+). The active-site Proton donor is Asp287.

This sequence belongs to the UbiD family. Homohexamer. It depends on prenylated FMN as a cofactor. Mn(2+) serves as cofactor.

Its subcellular location is the cell membrane. The catalysed reaction is a 4-hydroxy-3-(all-trans-polyprenyl)benzoate + H(+) = a 2-(all-trans-polyprenyl)phenol + CO2. Its pathway is cofactor biosynthesis; ubiquinone biosynthesis. Its function is as follows. Catalyzes the decarboxylation of 3-octaprenyl-4-hydroxy benzoate to 2-octaprenylphenol, an intermediate step in ubiquinone biosynthesis. This is 3-octaprenyl-4-hydroxybenzoate carboxy-lyase from Stutzerimonas stutzeri (strain A1501) (Pseudomonas stutzeri).